The following is a 125-amino-acid chain: Small ribosomal subunit protein uS12c (125 aa).

Belongs to the universal ribosomal protein uS12 family. Part of the 30S ribosomal subunit.

Its subcellular location is the plastid. In terms of biological role, with S4 and S5 plays an important role in translational accuracy. Located at the interface of the 30S and 50S subunits. The protein is Small ribosomal subunit protein uS12c (rps12) of Euglena longa (Euglenophycean alga).